We begin with the raw amino-acid sequence, 655 residues long: Probable replication factor A 73 kDa subunit (655 aa).

A disordered region spans residues 195–217 (NRAAAPEATRARAVPPPARRTAS). The span at 196–207 (RAAAPEATRARA) shows a compositional bias: low complexity. The segment at residues 236 to 326 (FKIHGMVSRK…TLRSDSIIEA (91 aa)) is a DNA-binding region (OB). The C4-type zinc finger occupies 518–539 (CASEGCQKKLVGENGDYRCEKC).

This sequence belongs to the replication factor A protein 1 family. In terms of assembly, component of the heterotrimeric canonical replication protein A complex (RPA).

Its subcellular location is the nucleus. Its function is as follows. As part of the heterotrimeric replication protein A complex (RPA/RP-A), binds and stabilizes single-stranded DNA intermediates, that form during DNA replication or upon DNA stress. It prevents their reannealing and in parallel, recruits and activates different proteins and complexes involved in DNA metabolism. Thereby, it plays an essential role both in DNA replication and the cellular response to DNA damage. The chain is Probable replication factor A 73 kDa subunit from Caenorhabditis elegans.